A 276-amino-acid chain; its full sequence is 4-deoxy-L-threo-5-hexosulose-uronate ketol-isomerase 1 (276 aa).

Zn(2+)-binding residues include His194, His196, Glu201, and His243.

The protein belongs to the KduI family. Zn(2+) is required as a cofactor.

It carries out the reaction 5-dehydro-4-deoxy-D-glucuronate = 3-deoxy-D-glycero-2,5-hexodiulosonate. The protein operates within glycan metabolism; pectin degradation; 2-dehydro-3-deoxy-D-gluconate from pectin: step 4/5. Functionally, catalyzes the isomerization of 5-dehydro-4-deoxy-D-glucuronate to 3-deoxy-D-glycero-2,5-hexodiulosonate. The polypeptide is 4-deoxy-L-threo-5-hexosulose-uronate ketol-isomerase 1 (kduI1) (Enterococcus faecalis (strain ATCC 700802 / V583)).